Consider the following 1051-residue polypeptide: MAPVRKSRSVNKRFTNETSPRKDAGKSKKNKLRKKLSDKLGPQWTRLELERFYDAYRKHGQEWRRVAAAIRNSRSVDMVEALFNMNRAYLSLPEGTASVAGLIAMMTDHYSVMEGSGSEGEGHDASEVPRKQQKRKRAKPQRSDSPEEVDIQQSIGSPDGCLTFLKQARANGTQRHATGKRTPRVPVQTSFMRDDREGSTPPNKRARKQFDANDDVAHFLALALTDASRRGGSPKVSESPNRRTELSDSSPIKSWGKMSRTRKSQSKHCGSSIFEEWMESSRERKLDSDKDTTLLMDMERAGEMEAPRKGKRVYKKRVKVEEAECNDSDDNGEACSATQGLRSKSQRRKAAIEASREKYSPRSPKKRDDKHTSGAFDALQALAELSASMLPANLMESELSAQLKEERTEYDMDEKSSTPEATSTSSHGEKANVEPDDSLLHAISSVENANKRKSKPSRLVSTDCDDVPTGKLQPQTSGSLRKRKPKVLGDEAPAEFSQNKSINKKELPQDENNMKSLVKTKRAGQVPAQSKQMKTVKALEESAITSDKKRPGMDIVASPKQVSDSGPTSLSQKPPNRRKKSLQKSLQEKAKSSETTHKAARSSRSLSEQELLLKDKLATSLSFPFARRRCIFEWFYSAIDHPWFSKMEFVDYLNHVGLGHIPRLTRLEWSVIKSSLGRPRRFSERFLHEEREKLKQYRESVRKHYTELRTGAREGLPTDLARPLAVGNRVIAIHPKTREIHDGKILTVDHNKCNVLFDDLGVELVMDIDCMPLNPLEYMPEGLRRQIDKCLSMKKEAQLSGNTNLGVSVLFPPCGLENVSFSMNPPLNQGDMIAPILHGKVSSNTSSPRQTNHSYITTYNKAKEAEIQRAQALQHALDEKEMEPEMLEIVKGSKTRAQAMVDAAIKAASSVKEGEDVNTMIQEALELVGKNQLLRSSMVKHHEHVNGSIEHHHNPSPSNGSEPVANNDLNSQDGSEKNAQMPSELITSCVATWLMIQMCTERQYPPADVAQLIDAAVTSLQPRCPQNLPIYREIQTCMGRIKTQIMSLVPT.

Basic residues-rich tracts occupy residues 1–11 and 27–36; these read MAPVRKSRSVN and SKKNKLRKKL. Positions 1 to 37 are disordered; it reads MAPVRKSRSVNKRFTNETSPRKDAGKSKKNKLRKKLS. In terms of domain architecture, SANT spans 39–93; that stretch reads KLGPQWTRLELERFYDAYRKHGQEWRRVAAAIRNSRSVDMVEALFNMNRAYLSLP. 6 disordered regions span residues 114-158, 170-210, 225-293, 323-375, 397-605, and 948-981; these read EGSG…IGSP, ANGT…RKQF, TDAS…KDTT, AECN…TSGA, SELS…SSRS, and SIEHHHNPSPSNGSEPVANNDLNSQDGSEKNAQM. A compositionally biased stretch (basic and acidic residues) spans 120 to 130; the sequence is GEGHDASEVPR. Positions 131–140 are enriched in basic residues; it reads KQQKRKRAKP. The span at 279–293 shows a compositional bias: basic and acidic residues; the sequence is ESSRERKLDSDKDTT. Positions 323 to 332 are enriched in acidic residues; that stretch reads AECNDSDDNG. Composition is skewed to basic and acidic residues over residues 350–372 and 403–417; these read AAIEASREKYSPRSPKKRDDKHT and LKEERTEYDMDEKSS. Over residues 560 to 574 the composition is skewed to polar residues; it reads KQVSDSGPTSLSQKP. Basic and acidic residues predominate over residues 586–597; that stretch reads LQEKAKSSETTH. Positions 967–981 are enriched in polar residues; that stretch reads NDLNSQDGSEKNAQM.

As to quaternary structure, interacts with SNL1 (via PAH3). Expressed ubiquitously in vegetative and reproductive tissues.

It is found in the nucleus. This chain is Protein ALWAYS EARLY 2 (ALY2), found in Arabidopsis thaliana (Mouse-ear cress).